A 118-amino-acid polypeptide reads, in one-letter code: Small ribosomal subunit protein uS13 (118 aa).

Residues 94–118 are disordered; the sequence is GLPVRGQRTKTNARTRKGPRKPIKK.

The protein belongs to the universal ribosomal protein uS13 family. Part of the 30S ribosomal subunit. Forms a loose heterodimer with protein S19. Forms two bridges to the 50S subunit in the 70S ribosome.

Located at the top of the head of the 30S subunit, it contacts several helices of the 16S rRNA. In the 70S ribosome it contacts the 23S rRNA (bridge B1a) and protein L5 of the 50S subunit (bridge B1b), connecting the 2 subunits; these bridges are implicated in subunit movement. Contacts the tRNAs in the A and P-sites. The sequence is that of Small ribosomal subunit protein uS13 from Mannheimia succiniciproducens (strain KCTC 0769BP / MBEL55E).